A 313-amino-acid chain; its full sequence is NF-kappa-B inhibitor delta (313 aa).

6 ANK repeats span residues 48–83 (EGDTLLHLFAARGLRWAAYAAAEVLQVYRRLDIREH), 84–113 (KGKTPLLVAAAANQPLIVEDLLNLGAEPNA), 117–146 (QGRSVLHVAATYGLPGVLLAVLNSGVQVDL), 152–201 (EGLT…NHTS), 206–236 (SNKTVLHLAVQAANPTLVQLLLELPRGDLRT), and 243–276 (HGNTALHMAAALPPGPAQEAIVRHLLAAGADPTL).

The protein belongs to the NF-kappa-B inhibitor family. In terms of assembly, interacts with NFKB1, RELA and RELB; in the nucleus.

The protein localises to the nucleus. Regulates the expression of IL-2, IL-6, and other cytokines through regulation on NF-kappa-B activity. Functions in the regulation of inflammatory responses. Involved in the induction of T helper 17 cells (Th17) differentiation upon recognition of antigen by T cell antigen receptor (TCR). May also regulate TCR-induced negative selection of thymocytes. This chain is NF-kappa-B inhibitor delta (NFKBID), found in Homo sapiens (Human).